The chain runs to 348 residues: Rhodopsin (348 aa).

Residue M1 is modified to N-acetylmethionine. Residues 1–36 are Extracellular-facing; the sequence is MNGTEGPNFYVPFSNATGVVRSPFEYPQYYLAEPWQ. N-linked (GlcNAc...) asparagine glycans are attached at residues N2 and N15. Residues 37–61 traverse the membrane as a helical segment; that stretch reads FSMLAAYMFMLIVLGFPINFLTLYV. Over 62–73 the chain is Cytoplasmic; it reads TVQHKKLRTPLN. The chain crosses the membrane as a helical span at residues 74-96; sequence YILLNLAVADLFMVFGGFTTTLY. At 97–110 the chain is on the extracellular side; that stretch reads TSLHGYFVFGPTGC. C110 and C187 are oxidised to a cystine. Residues 111–133 traverse the membrane as a helical segment; the sequence is NLEGFFATLGGEIALWSLVVLAI. Residues 134–136 carry the 'Ionic lock' involved in activated form stabilization motif; the sequence is ERY. Residues 134–152 lie on the Cytoplasmic side of the membrane; the sequence is ERYVVVCKPMSNFRFGENH. The helical transmembrane segment at 153 to 173 threads the bilayer; that stretch reads AIMGLVFTWIMALACAAPPLV. Over 174–202 the chain is Extracellular; sequence GWSRYIPEGMQCSCGIDYYTLKPEVNNES. E201 lines the Zn(2+) pocket. The chain crosses the membrane as a helical span at residues 203–224; sequence FVIYMFVVHFFIPLFVIFFCYG. Residues 225 to 252 are Cytoplasmic-facing; the sequence is QLVFTVKEAAAQQQESATTQKAEKEVTR. A helical membrane pass occupies residues 253 to 274; sequence MVIIMVIAFLICWLPYAGVAFY. The Extracellular segment spans residues 275-286; the sequence is IFTHQGSNFGPI. Q279 contributes to the Zn(2+) binding site. The helical transmembrane segment at 287-308 threads the bilayer; it reads FMTLPAFFAKTASIYNPVIYIM. An N6-(retinylidene)lysine modification is found at K296. At 309–348 the chain is on the cytoplasmic side; it reads MNKQFRTCMITTLCCGKNPLGDDEASTTASKTETSQVAPA. Residues C322 and C323 are each lipidated (S-palmitoyl cysteine). The segment at 330 to 348 is interaction with SAG; sequence DDEASTTASKTETSQVAPA. S334 is modified (phosphoserine). Phosphothreonine is present on residues T335 and T336. Residue S338 is modified to Phosphoserine. Phosphothreonine occurs at positions 340 and 342. S343 is subject to Phosphoserine.

Belongs to the G-protein coupled receptor 1 family. Opsin subfamily. Homodimer. May form a complex composed of RHO, GRK1 and RCVRN in a Ca(2+)-dependent manner; RCVRN prevents the interaction between GRK1 and RHO. Interacts with GRK1. Interacts (phosphorylated form) with SAG. Interacts with GNAT1. Interacts with GNAT3. SAG and G-proteins compete for a common binding site. Interacts with PRCD; the interaction promotes PRCD stability. Forms a complex with ASAP1 and ARF4. Forms a complex with ASAP1, RAB11A, Rabin8/RAB3IP, ARF4 and RAB11FIP3; the complex regulates Golgi-to-cilia rhodopsin/RHO transport in photoreceptors. Phosphorylated on some or all of the serine and threonine residues present in the C-terminal region. In terms of processing, contains one covalently linked retinal chromophore. Upon light absorption, the covalently bound 11-cis-retinal is converted to all-trans-retinal. After hydrolysis of the Schiff base and release of the covalently bound all-trans-retinal, active rhodopsin is regenerated by binding of a fresh molecule of 11-cis-retinal.

The protein resides in the membrane. Its subcellular location is the cell projection. It localises to the cilium. It is found in the photoreceptor outer segment. Photoreceptor required for image-forming vision at low light intensity. Required for photoreceptor cell viability after birth. Light-induced isomerization of 11-cis to all-trans retinal triggers a conformational change that activates signaling via G-proteins. Subsequent receptor phosphorylation mediates displacement of the bound G-protein alpha subunit by the arrestin SAG and terminates signaling. This Otolemur crassicaudatus (Brown greater galago) protein is Rhodopsin (RHO).